A 123-amino-acid chain; its full sequence is uncharacterized protein (123 aa).

This is an uncharacterized protein from Autographa californica nuclear polyhedrosis virus (AcMNPV).